The sequence spans 411 residues: Adenylosuccinate synthetase (411 aa).

Residues 11–17 (GDEGKGK) and 39–41 (GHT) each bind GTP. Aspartate 12 functions as the Proton acceptor in the catalytic mechanism. Mg(2+)-binding residues include aspartate 12 and glycine 39. IMP-binding positions include 12 to 15 (DEGK), 37 to 40 (NAGH), threonine 121, arginine 135, glutamine 215, threonine 230, and arginine 294. The active-site Proton donor is the histidine 40. Position 290 to 296 (290 to 296 (TTTKRPR)) interacts with substrate. Residues arginine 296, 322–324 (KLD), and 400–402 (STS) contribute to the GTP site.

The protein belongs to the adenylosuccinate synthetase family. Homodimer. Mg(2+) serves as cofactor.

It is found in the cytoplasm. It catalyses the reaction IMP + L-aspartate + GTP = N(6)-(1,2-dicarboxyethyl)-AMP + GDP + phosphate + 2 H(+). It functions in the pathway purine metabolism; AMP biosynthesis via de novo pathway; AMP from IMP: step 1/2. Plays an important role in the de novo pathway of purine nucleotide biosynthesis. Catalyzes the first committed step in the biosynthesis of AMP from IMP. This is Adenylosuccinate synthetase from Helicobacter pylori (strain Shi470).